Consider the following 380-residue polypeptide: Cytochrome b (380 aa).

Helical transmembrane passes span 34–54 (FGSL…LLAM), 78–99 (WLIR…FLHI), 114–134 (WNTG…GYVL), and 179–199 (FFAL…THLM). 2 residues coordinate heme b: H84 and H98. Residues H183 and H197 each coordinate heme b. H202 contributes to the a ubiquinone binding site. Helical transmembrane passes span 227 to 247 (LKDI…ALFS), 289 to 309 (LGGV…PFLH), 321 to 341 (LSQA…WVGS), and 348 to 368 (FIII…SLLP).

The protein belongs to the cytochrome b family. As to quaternary structure, the cytochrome bc1 complex contains 11 subunits: 3 respiratory subunits (MT-CYB, CYC1 and UQCRFS1), 2 core proteins (UQCRC1 and UQCRC2) and 6 low-molecular weight proteins (UQCRH/QCR6, UQCRB/QCR7, UQCRQ/QCR8, UQCR10/QCR9, UQCR11/QCR10 and a cleavage product of UQCRFS1). This cytochrome bc1 complex then forms a dimer. Heme b is required as a cofactor.

The protein localises to the mitochondrion inner membrane. Component of the ubiquinol-cytochrome c reductase complex (complex III or cytochrome b-c1 complex) that is part of the mitochondrial respiratory chain. The b-c1 complex mediates electron transfer from ubiquinol to cytochrome c. Contributes to the generation of a proton gradient across the mitochondrial membrane that is then used for ATP synthesis. This chain is Cytochrome b (MT-CYB), found in Crossoptilon crossoptilon (White-eared pheasant).